A 48-amino-acid polypeptide reads, in one-letter code: ATP synthase protein 8 (48 aa).

A helical membrane pass occupies residues 16 to 36 (GFLLMTILLVLFSQFFLPMIL).

This sequence belongs to the ATPase protein 8 family. As to quaternary structure, F-type ATPases have 2 components, CF(1) - the catalytic core - and CF(0) - the membrane proton channel.

It localises to the mitochondrion membrane. Its function is as follows. Mitochondrial membrane ATP synthase (F(1)F(0) ATP synthase or Complex V) produces ATP from ADP in the presence of a proton gradient across the membrane which is generated by electron transport complexes of the respiratory chain. F-type ATPases consist of two structural domains, F(1) - containing the extramembraneous catalytic core and F(0) - containing the membrane proton channel, linked together by a central stalk and a peripheral stalk. During catalysis, ATP synthesis in the catalytic domain of F(1) is coupled via a rotary mechanism of the central stalk subunits to proton translocation. Part of the complex F(0) domain. Minor subunit located with subunit a in the membrane. The sequence is that of ATP synthase protein 8 (ATP8) from Vanderwaltozyma polyspora (strain ATCC 22028 / DSM 70294 / BCRC 21397 / CBS 2163 / NBRC 10782 / NRRL Y-8283 / UCD 57-17) (Kluyveromyces polysporus).